Reading from the N-terminus, the 159-residue chain is Ribosomal RNA large subunit methyltransferase H (159 aa).

S-adenosyl-L-methionine contacts are provided by residues L76, G108, and 127–132 (FSKMTF).

The protein belongs to the RNA methyltransferase RlmH family. In terms of assembly, homodimer.

The protein resides in the cytoplasm. It carries out the reaction pseudouridine(1915) in 23S rRNA + S-adenosyl-L-methionine = N(3)-methylpseudouridine(1915) in 23S rRNA + S-adenosyl-L-homocysteine + H(+). In terms of biological role, specifically methylates the pseudouridine at position 1915 (m3Psi1915) in 23S rRNA. The sequence is that of Ribosomal RNA large subunit methyltransferase H from Geobacillus kaustophilus (strain HTA426).